A 113-amino-acid polypeptide reads, in one-letter code: Holo-[acyl-carrier-protein] synthase (113 aa).

Residues aspartate 5 and glutamate 50 each contribute to the Mg(2+) site.

The protein belongs to the P-Pant transferase superfamily. AcpS family. Mg(2+) serves as cofactor.

Its subcellular location is the cytoplasm. The catalysed reaction is apo-[ACP] + CoA = holo-[ACP] + adenosine 3',5'-bisphosphate + H(+). In terms of biological role, transfers the 4'-phosphopantetheine moiety from coenzyme A to a Ser of acyl-carrier-protein. In Nautilia profundicola (strain ATCC BAA-1463 / DSM 18972 / AmH), this protein is Holo-[acyl-carrier-protein] synthase.